The following is a 125-amino-acid chain: Large ribosomal subunit protein uL22 (125 aa).

It belongs to the universal ribosomal protein uL22 family. Part of the 50S ribosomal subunit.

This protein binds specifically to 23S rRNA; its binding is stimulated by other ribosomal proteins, e.g. L4, L17, and L20. It is important during the early stages of 50S assembly. It makes multiple contacts with different domains of the 23S rRNA in the assembled 50S subunit and ribosome. Functionally, the globular domain of the protein is located near the polypeptide exit tunnel on the outside of the subunit, while an extended beta-hairpin is found that lines the wall of the exit tunnel in the center of the 70S ribosome. This Acetivibrio thermocellus (strain ATCC 27405 / DSM 1237 / JCM 9322 / NBRC 103400 / NCIMB 10682 / NRRL B-4536 / VPI 7372) (Clostridium thermocellum) protein is Large ribosomal subunit protein uL22.